Reading from the N-terminus, the 320-residue chain is Lactamase-like protein GME11357 (320 aa).

His-106, His-108, Asp-110, and His-111 together coordinate Zn(2+). Residue Asp-110 is the Proton donor/acceptor of the active site.

The protein belongs to the metallo-beta-lactamase superfamily. Requires Zn(2+) as cofactor.

It functions in the pathway secondary metabolite biosynthesis. Lactamase-like protein; part of the gene cluster that mediates the biosynthesis of dibenzodioxocinones such as pestalotiollide B, a novel class of inhibitors against cholesterol ester transfer protein (CEPT). The biosynthesis initiates from condensation of acetate and malonate units catalyzed by the non-reducing PKS pks8/GME11356. Pks8/GME11356 lacks a thioesterase (TE) domain, which is important to the cyclizing of the third ring of atrochrysone carboxylic acid, and the esterase GME11355 might play the role of TE and catalyzes the cyclization reaction of the C ring. The lactamase-like protein GME11357 (or other beta-lactamases in Pestalotiopsis microspora) probably hydrolyzes the thioester bond between the ACP of pks8/GME11356 and the intermediate to release atrochrysone carboxylic acid, which is spontaneously dehydrates to form endocrocin anthrone. Endocrocin anthrone is further converted to emodin via the endocrocin intermediate. Emodin is then oxidized by several enzymes such as the Baeyer-Villiger oxidase GME11358, the oxidoreductase GME11367, the short chain dehydrogenase/reductase GME11373, as well as by other oxidoreductases from the cluster, to modify the A and C rings and open the B ring, and finally yield monodictyphenone. The prenyltransferase GME11375 may catalyze the addition reaction between the C5 side chains and the carbon bone of dibenzodioxocinones. The remaining biochemical reactions to the final product dibenzodioxocinones should be methylation catalyzed by methyltransferase GME11366 and reduction and lactonization reaction catalyzed by a series of oxidordeuctases. The sequence is that of Lactamase-like protein GME11357 from Pestalotiopsis microspora.